Consider the following 867-residue polypeptide: Cadherin-related family member 1 (867 aa).

A signal peptide spans 1–21; it reads MKHEWNLCPSIFFSIFHICLS. At 22–707 the chain is on the extracellular side; it reads VQTNYGPYFF…SKDNPMKALG (686 aa). Cadherin domains are found at residues 39–138, 139–250, 251–357, 363–476, 477–580, and 572–692; these read NGNM…SPGF, LNTP…PPVF, VGTP…PPTF, PQNR…VPRF, SSEY…SPEF, and DIND…GPMA. A helical membrane pass occupies residues 708–728; sequence VLAGVMAIMVVITIFISTAMF. The Cytoplasmic portion of the chain corresponds to 729–867; the sequence is WRNKKSNRVM…KNAGSSMSFY (139 aa). Positions 777 to 825 are disordered; that stretch reads EMESGPKNENRNNNYQGIPVPPRAPCPPPPPRLMPKVSKTERSLPTVSG. Residues 795–809 show a composition bias toward pro residues; that stretch reads PVPPRAPCPPPPPRL.

In terms of tissue distribution, expressed in photoreceptor cells of the outer nuclear layer of the retina and in the pinal gland.

The protein localises to the membrane. In terms of biological role, potential calcium-dependent cell-adhesion protein. The polypeptide is Cadherin-related family member 1 (cdhr1) (Xenopus laevis (African clawed frog)).